Here is a 173-residue protein sequence, read N- to C-terminus: MEKVIAKTYAKAILERNDFENFYSNLLELSSAFASNKFIDILNSYEIKQDKKLELILSLLDNPSDAFKNFINLIVDNKREMLIPEITKELSEQKASKENTFLGQVYSKEKLSEEEIKNLEEKLSLKFNAKIRLDSKISDNDSVKISLDGLGYEISFSMQSLKAKMNEYILKAI.

It belongs to the ATPase delta chain family. In terms of assembly, F-type ATPases have 2 components, F(1) - the catalytic core - and F(0) - the membrane proton channel. F(1) has five subunits: alpha(3), beta(3), gamma(1), delta(1), epsilon(1). F(0) has three main subunits: a(1), b(2) and c(10-14). The alpha and beta chains form an alternating ring which encloses part of the gamma chain. F(1) is attached to F(0) by a central stalk formed by the gamma and epsilon chains, while a peripheral stalk is formed by the delta and b chains.

The protein resides in the cell inner membrane. Functionally, f(1)F(0) ATP synthase produces ATP from ADP in the presence of a proton or sodium gradient. F-type ATPases consist of two structural domains, F(1) containing the extramembraneous catalytic core and F(0) containing the membrane proton channel, linked together by a central stalk and a peripheral stalk. During catalysis, ATP synthesis in the catalytic domain of F(1) is coupled via a rotary mechanism of the central stalk subunits to proton translocation. In terms of biological role, this protein is part of the stalk that links CF(0) to CF(1). It either transmits conformational changes from CF(0) to CF(1) or is implicated in proton conduction. This is ATP synthase subunit delta from Campylobacter lari (strain RM2100 / D67 / ATCC BAA-1060).